The following is a 172-amino-acid chain: Small ribosomal subunit protein uS5 (172 aa).

Residues 13–76 enclose the S5 DRBM domain; the sequence is LVEKMISVNR…EQARHNMMKI (64 aa).

The protein belongs to the universal ribosomal protein uS5 family. Part of the 30S ribosomal subunit. Contacts proteins S4 and S8.

Its function is as follows. With S4 and S12 plays an important role in translational accuracy. Located at the back of the 30S subunit body where it stabilizes the conformation of the head with respect to the body. This Chromobacterium violaceum (strain ATCC 12472 / DSM 30191 / JCM 1249 / CCUG 213 / NBRC 12614 / NCIMB 9131 / NCTC 9757 / MK) protein is Small ribosomal subunit protein uS5.